The chain runs to 330 residues: tRNA uridine(34) hydroxylase (330 aa).

Residues 123–217 (SDPETILVDT…YLEEVPKEES (95 aa)) form the Rhodanese domain. The Cysteine persulfide intermediate role is filled by cysteine 177. Positions 310–330 (LNKQQKQQAKEIARKKAKSEI) are disordered. Positions 317-330 (QAKEIARKKAKSEI) are enriched in basic and acidic residues.

The protein belongs to the TrhO family.

The enzyme catalyses uridine(34) in tRNA + AH2 + O2 = 5-hydroxyuridine(34) in tRNA + A + H2O. Its function is as follows. Catalyzes oxygen-dependent 5-hydroxyuridine (ho5U) modification at position 34 in tRNAs. The polypeptide is tRNA uridine(34) hydroxylase (Francisella philomiragia subsp. philomiragia (strain ATCC 25017 / CCUG 19701 / FSC 153 / O#319-036)).